A 741-amino-acid polypeptide reads, in one-letter code: NAD(P)H-quinone oxidoreductase subunit 5, chloroplastic (741 aa).

The next 16 helical transmembrane spans lie at 9–29 (WIIP…LLLF), 40–60 (WAFQ…NLSI), 89–109 (IDPL…MVLI), 125–145 (FAYM…SNLI), 147–167 (IYIF…FWFT), 185–205 (GDFG…SFEF), 219–239 (NEVN…GAIA), 258–278 (TPIS…FLVA), 283–303 (LFIV…ITVF), 327–347 (LGYM…FHLI), 354–374 (ALLF…VGYC), 396–416 (NSFL…CFWS), 425–445 (WLYS…TAFY), 549–569 (LFPI…GIPF), 605–625 (VFSV…YKPV), and 718–738 (ISSY…IYYF).

The protein belongs to the complex I subunit 5 family. In terms of assembly, NDH is composed of at least 16 different subunits, 5 of which are encoded in the nucleus.

The protein resides in the plastid. It localises to the chloroplast thylakoid membrane. The enzyme catalyses a plastoquinone + NADH + (n+1) H(+)(in) = a plastoquinol + NAD(+) + n H(+)(out). It catalyses the reaction a plastoquinone + NADPH + (n+1) H(+)(in) = a plastoquinol + NADP(+) + n H(+)(out). Functionally, NDH shuttles electrons from NAD(P)H:plastoquinone, via FMN and iron-sulfur (Fe-S) centers, to quinones in the photosynthetic chain and possibly in a chloroplast respiratory chain. The immediate electron acceptor for the enzyme in this species is believed to be plastoquinone. Couples the redox reaction to proton translocation, and thus conserves the redox energy in a proton gradient. The sequence is that of NAD(P)H-quinone oxidoreductase subunit 5, chloroplastic (ndhF) from Athroisma gracile.